We begin with the raw amino-acid sequence, 963 residues long: Ubiquitin carboxyl-terminal hydrolase 4 (963 aa).

The DUSP domain maps to 11–122 (PDAETQKSEL…GQQPIVRKVV (112 aa)). The necessary for interaction with SART3 stretch occupies residues 27-216 (TLQRGAQWYL…LYLGQVLVIE (190 aa)). A Nuclear export signal motif is present at residues 133–141 (VEVYLLELK). One can recognise a Ubiquitin-like 1 domain in the interval 142 to 226 (LCENSDPTNV…PQNEDGTWPR (85 aa)). Positions 220–255 (EDGTWPRQTLQSKSSTAPSRNFTTSPKSSASPYSSV) are disordered. The span at 225-243 (PRQTLQSKSSTAPSRNFTT) shows a compositional bias: polar residues. The required for USP4 activation by providing conformational flexibility between the DUSP and catalytic domains stretch occupies residues 229–295 (LQSKSSTAPS…SYNCQEPPSS (67 aa)). Over residues 244 to 255 (SPKSSASPYSSV) the composition is skewed to low complexity. Positions 302–923 (CGLGNLGNTC…AAYVLFYQRR (622 aa)) constitute a USP domain. Catalysis depends on Cys311, which acts as the Nucleophile. The interval 384 to 386 (PQF) is regulates ubiquitin dissociation. The segment at 405–407 (LHE) is necessary for interaction with RBL2. Ser445 is modified (phosphoserine). The segment at 459–463 (LVCPE) is necessary for interaction with RB1 and RBL2. The Zn(2+) site is built by Cys461 and Cys464. The region spanning 483 to 571 (LKKDRVMEVF…IFVYEVCSTS (89 aa)) is the Ubiquitin-like 2 domain. The tract at residues 485–775 (KDRVMEVFLV…LQPQKKKKTT (291 aa)) is interacts with DUSP and ubiquitin-like 1 domains and is required for USP4 activation. The disordered stretch occupies residues 637–698 (DEFGSSPLEP…PSETTQKKIK (62 aa)). Phosphoserine is present on Ser655. Positions 657–666 (EGEDEEEMEH) are enriched in acidic residues. Phosphoserine is present on residues Ser675 and Ser680. The Nuclear localization signal signature appears at 767-772 (QPQKKK). 2 residues coordinate Zn(2+): Cys799 and Cys802. His881 serves as the catalytic Proton acceptor. Residues 928 to 963 (YKTPSLSSSGSSDGGTRPSSSQQGLGDDEACSMDTN) are disordered. Positions 932–948 (SLSSSGSSDGGTRPSSS) are enriched in low complexity. Over residues 953–963 (GDDEACSMDTN) the composition is skewed to acidic residues.

It belongs to the peptidase C19 family. USP4 subfamily. Interacts with RB1 (both dephosphorylated and hypophosphorylated forms). Interacts with RBL1 and RBL2. Interacts with ADORA2A (via cytoplasmic C-terminus); the interaction is direct. Interacts with SART3; recruits USP4 to its substrate PRPF3. Post-translationally, phosphorylated at Ser-445 by PKB/AKT1 in response to EGF stimulus, promoting its ability deubiquitinate RHEB. In terms of processing, monoubiquitinated by TRIM21. Ubiquitination does not lead to its proteasomal degradation. Autodeubiquitinated.

Its subcellular location is the cytoplasm. The protein localises to the nucleus. The catalysed reaction is Thiol-dependent hydrolysis of ester, thioester, amide, peptide and isopeptide bonds formed by the C-terminal Gly of ubiquitin (a 76-residue protein attached to proteins as an intracellular targeting signal).. Its activity is regulated as follows. The completion of the deubiquitinase reaction is mediated by the DUSP and ubiquitin-like 1 domains which promotes the release of ubiquitin from the catalytic site enabling subsequent reactions to occur. Its function is as follows. Deubiquitinating enzyme that removes conjugated ubiquitin from target proteins. Deubiquitinates PDPK1. Deubiquitinates TRIM21. Deubiquitinates receptor ADORA2A which increases the amount of functional receptor at the cell surface. Deubiquitinates HAS2. Deubiquitinates RHEB in response to EGF signaling, promoting mTORC1 signaling. May regulate mRNA splicing through deubiquitination of the U4 spliceosomal protein PRPF3. This may prevent its recognition by the U5 component PRPF8 thereby destabilizing interactions within the U4/U6.U5 snRNP. May also play a role in the regulation of quality control in the ER. This is Ubiquitin carboxyl-terminal hydrolase 4 (USP4) from Pongo abelii (Sumatran orangutan).